Consider the following 288-residue polypeptide: Phenazine biosynthesis-like domain-containing protein (288 aa).

Glu46 is a catalytic residue.

Belongs to the PhzF family. As to quaternary structure, interacts with UNRIP/MAWD.

This chain is Phenazine biosynthesis-like domain-containing protein (PBLD), found in Homo sapiens (Human).